A 212-amino-acid polypeptide reads, in one-letter code: Large ribosomal subunit protein uL3 (212 aa).

Residue Q153 is modified to N5-methylglutamine.

This sequence belongs to the universal ribosomal protein uL3 family. As to quaternary structure, part of the 50S ribosomal subunit. Forms a cluster with proteins L14 and L19. Methylated by PrmB.

One of the primary rRNA binding proteins, it binds directly near the 3'-end of the 23S rRNA, where it nucleates assembly of the 50S subunit. The protein is Large ribosomal subunit protein uL3 of Azoarcus sp. (strain BH72).